We begin with the raw amino-acid sequence, 319 residues long: Carbonic anhydrase 6 (319 aa).

An N-terminal signal peptide occupies residues 1 to 14 (MITLLFLLVVGAQA). The Alpha-carbonic anhydrase domain maps to 16-273 (HEWTYSEGVL…LNHRVVEANF (258 aa)). C37 and C219 are disulfide-bonded. N62 carries N-linked (GlcNAc...) asparagine glycosylation. Residue H80 is the Proton donor/acceptor of the active site. Zn(2+) contacts are provided by H106, H108, and H133. 215–216 (TT) is a binding site for substrate. N251 carries an N-linked (GlcNAc...) asparagine glycan.

The protein belongs to the alpha-carbonic anhydrase family. Requires Zn(2+) as cofactor. As to expression, major constituent of saliva.

It is found in the secreted. It catalyses the reaction hydrogencarbonate + H(+) = CO2 + H2O. Reversible hydration of carbon dioxide. Its role in saliva is unknown. In Bos taurus (Bovine), this protein is Carbonic anhydrase 6 (CA6).